A 205-amino-acid polypeptide reads, in one-letter code: Glycerol-3-phosphate acyltransferase (205 aa).

Topologically, residues 1–3 (MSA) are periplasmic. Residues 4–24 (IAPGMILFAYLCGSISSAILV) form a helical membrane-spanning segment. Topologically, residues 25 to 52 (CRIAGLPDPRESGSGNPGATNVLRIGGK) are cytoplasmic. A helical membrane pass occupies residues 53-73 (GAAVAVLIFDILKGMLPVWGA). Over 74 to 80 (YALGITP) the chain is Periplasmic. A helical transmembrane segment spans residues 81 to 101 (FWLGLIAIAACLGHIWPVFFG). At 102–111 (FKGGKGVATA) the chain is on the cytoplasmic side. Residues 112-132 (FGAIAPIGWDLTGVIAGTWLL) traverse the membrane as a helical segment. The Periplasmic segment spans residues 133 to 137 (TVLLS). Residues 138 to 158 (GYSSLGAIVSALIAPFYVWWF) traverse the membrane as a helical segment. Over 159–205 (KPQFTFPVSMLSCLILLRHHDNIQRLWRRQETKIWTKLKKKREKESK) the chain is Cytoplasmic.

The protein belongs to the PlsY family. As to quaternary structure, probably interacts with PlsX.

The protein localises to the cell inner membrane. The enzyme catalyses sn-glycerol 3-phosphate + an acyl-CoA = a 1-acyl-sn-glycero-3-phosphate + CoA. The catalysed reaction is a fatty acyl-[ACP] + sn-glycerol 3-phosphate = a 1-acyl-sn-glycero-3-phosphate + holo-[ACP]. The protein operates within lipid metabolism; phospholipid metabolism. Catalyzes the transfer of an acyl group from acyl-ACP to glycerol-3-phosphate (G3P) to form lysophosphatidic acid (LPA). This enzyme can also utilize acyl-CoA as fatty acyl donor, but not acyl-PO(4). This Salmonella arizonae (strain ATCC BAA-731 / CDC346-86 / RSK2980) protein is Glycerol-3-phosphate acyltransferase.